The primary structure comprises 279 residues: Putative pyruvate, phosphate dikinase regulatory protein (279 aa).

An ADP-binding site is contributed by 156 to 163 (GISRVGKT).

The protein belongs to the pyruvate, phosphate/water dikinase regulatory protein family. PDRP subfamily.

It carries out the reaction N(tele)-phospho-L-histidyl/L-threonyl-[pyruvate, phosphate dikinase] + ADP = N(tele)-phospho-L-histidyl/O-phospho-L-threonyl-[pyruvate, phosphate dikinase] + AMP + H(+). The enzyme catalyses N(tele)-phospho-L-histidyl/O-phospho-L-threonyl-[pyruvate, phosphate dikinase] + phosphate + H(+) = N(tele)-phospho-L-histidyl/L-threonyl-[pyruvate, phosphate dikinase] + diphosphate. Functionally, bifunctional serine/threonine kinase and phosphorylase involved in the regulation of the pyruvate, phosphate dikinase (PPDK) by catalyzing its phosphorylation/dephosphorylation. The polypeptide is Putative pyruvate, phosphate dikinase regulatory protein (Chloroflexus aurantiacus (strain ATCC 29366 / DSM 635 / J-10-fl)).